We begin with the raw amino-acid sequence, 482 residues long: Glycogen synthase (482 aa).

Lys15 is a binding site for ADP-alpha-D-glucose.

The protein belongs to the glycosyltransferase 1 family. Bacterial/plant glycogen synthase subfamily.

It carries out the reaction [(1-&gt;4)-alpha-D-glucosyl](n) + ADP-alpha-D-glucose = [(1-&gt;4)-alpha-D-glucosyl](n+1) + ADP + H(+). It functions in the pathway glycan biosynthesis; glycogen biosynthesis. In terms of biological role, synthesizes alpha-1,4-glucan chains using ADP-glucose. The protein is Glycogen synthase of Hydrogenobaculum sp. (strain Y04AAS1).